The following is a 1102-amino-acid chain: Voltage-gated delayed rectifier potassium channel KCNH8 (1102 aa).

Over 1–225 (MPVMKGLLAP…HFSTFKAGWD (225 aa)) the chain is Cytoplasmic. In terms of domain architecture, PAS spans 18 to 90 (IATRFDGTHS…LQIEKSLEEK (73 aa)). The PAC domain occupies 93-145 (FKGEIMFYKKNGAPFWCLLDIVPIKNEKGDVVLFLASFKDITDTKVKITSEDK). Residues 226-246 (WLILLATFYVAVTVPYNVCFI) traverse the membrane as a helical segment. Residues 247–255 (GNEDLSTTR) lie on the Extracellular side of the membrane. The chain crosses the membrane as a helical span at residues 256–276 (STTVSDIAVEILFIIDIILNF). The Cytoplasmic segment spans residues 277-298 (RTTYVSKSGQVIFEARSICIHY). Residues 299–319 (VTTWFIIDLIAALPFDLLYAF) form a helical membrane-spanning segment. Asn320 carries N-linked (GlcNAc...) asparagine glycosylation. Topologically, residues 320-327 (NVTVVSLV) are extracellular. The helical; Voltage-sensor transmembrane segment at 328–348 (HLLKTVRLLRLLRLLQKLDRY) threads the bilayer. Residues 349-353 (SQHST) lie on the Cytoplasmic side of the membrane. The helical transmembrane segment at 354–374 (IVLTLLMSMFALLAHWMACIW) threads the bilayer. Residues 375 to 419 (YVIGKMEREDNSLLKWEVGWLHELGKRLESPYYGNNTLGGPSIRS) are Extracellular-facing. Asn409 carries an N-linked (GlcNAc...) asparagine glycan. The pore-forming intramembrane region spans 420–440 (AYIAALYFTLSSLTSVGFGNV). The Selectivity filter signature appears at 434–439 (SVGFGN). Over 441–448 (SANTDAEK) the chain is Extracellular. The chain crosses the membrane as a helical span at residues 449–469 (IFSICTMLIGALMHALVFGNV). Residues 470–1102 (TAIIQRMYSR…DVKDSKAINV (633 aa)) are Cytoplasmic-facing. Positions 551 to 668 (LFECASRGCL…HKFVEDIQHD (118 aa)) are cNMP-binding domain. Disordered stretches follow at residues 683–744 (SRLS…KTGS), 762–793 (PFHS…KEKN), 818–845 (EDGN…ISPS), and 960–983 (LVGS…LHHS). Residues 710–723 (VEDEEEEEVEEEET) show a composition bias toward acidic residues. Positions 777–793 (TKQEADPPNHGTRKEKN) are enriched in basic and acidic residues. Over residues 968–982 (TEAHEQSPVDSELHH) the composition is skewed to basic and acidic residues.

This sequence belongs to the potassium channel family. H (Eag) (TC 1.A.1.20) subfamily. Kv12.1/KCNH8 sub-subfamily. As to quaternary structure, the potassium channel is probably composed of a homo- or heterotetrameric complex of pore-forming alpha subunits that can associate with modulating beta subunits. As to expression, detected in superior cervical, mesenteric and coeliac ganglia. Expressed in brain (piriform cortex, olfactory tubercle, cerebral cortex, hippocampus pyramidial cells and dentate gyrus and basal ganglia of caudate/putamen and accumbens nucleus). Expressed in pituitary.

The protein localises to the membrane. The catalysed reaction is K(+)(in) = K(+)(out). Its function is as follows. Pore-forming (alpha) subunit of a voltage-gated delayed rectifier potassium channel that mediates outward-rectifying potassium currents. Elicits a slowly activating, non-inactivating and slowly deactivation outwards potassium current at depolarizating voltages from -30 mV to +50mV. Shows no obvious change in the activation rate from different holding potentials. Activation is strongly dependent on the pH of the external solution. The sequence is that of Voltage-gated delayed rectifier potassium channel KCNH8 from Rattus norvegicus (Rat).